A 108-amino-acid chain; its full sequence is Type III secretion system chaperone SseA (108 aa).

Positions 69-97 form a coiled coil; sequence NQEAEKDLKKIVSLFKQLEVRLKQLNAQA.

Binds to SseB and SseD.

It localises to the cytoplasm. Its function is as follows. Functions as a type III secretion system (T3SS) chaperone, which is required for SseB and SseD accumulation and secretion. May have a direct role in secretion of SseB and SseD, or may facilitate their correct folding, for efficient secretion and function. Required for survival and replication within epithelial cells and macrophages. The sequence is that of Type III secretion system chaperone SseA (sseA) from Salmonella typhimurium (strain LT2 / SGSC1412 / ATCC 700720).